Here is a 156-residue protein sequence, read N- to C-terminus: D-aminoacyl-tRNA deacylase (156 aa).

A Gly-cisPro motif, important for rejection of L-amino acids motif is present at residues 142-143 (GP).

The protein belongs to the DTD family. In terms of assembly, homodimer.

The protein resides in the cytoplasm. It carries out the reaction glycyl-tRNA(Ala) + H2O = tRNA(Ala) + glycine + H(+). The catalysed reaction is a D-aminoacyl-tRNA + H2O = a tRNA + a D-alpha-amino acid + H(+). An aminoacyl-tRNA editing enzyme that deacylates mischarged D-aminoacyl-tRNAs. Also deacylates mischarged glycyl-tRNA(Ala), protecting cells against glycine mischarging by AlaRS. Acts via tRNA-based rather than protein-based catalysis; rejects L-amino acids rather than detecting D-amino acids in the active site. By recycling D-aminoacyl-tRNA to D-amino acids and free tRNA molecules, this enzyme counteracts the toxicity associated with the formation of D-aminoacyl-tRNA entities in vivo and helps enforce protein L-homochirality. This chain is D-aminoacyl-tRNA deacylase, found in Cupriavidus pinatubonensis (strain JMP 134 / LMG 1197) (Cupriavidus necator (strain JMP 134)).